Here is a 912-residue protein sequence, read N- to C-terminus: Phosphoenolpyruvate carboxylase (912 aa).

Active-site residues include histidine 138 and lysine 575.

It belongs to the PEPCase type 1 family. The cofactor is Mg(2+).

It catalyses the reaction oxaloacetate + phosphate = phosphoenolpyruvate + hydrogencarbonate. In terms of biological role, forms oxaloacetate, a four-carbon dicarboxylic acid source for the tricarboxylic acid cycle. The polypeptide is Phosphoenolpyruvate carboxylase (Lactobacillus acidophilus (strain ATCC 700396 / NCK56 / N2 / NCFM)).